Reading from the N-terminus, the 341-residue chain is S-adenosylmethionine:tRNA ribosyltransferase-isomerase (341 aa).

This sequence belongs to the QueA family. In terms of assembly, monomer.

It localises to the cytoplasm. It carries out the reaction 7-aminomethyl-7-carbaguanosine(34) in tRNA + S-adenosyl-L-methionine = epoxyqueuosine(34) in tRNA + adenine + L-methionine + 2 H(+). It functions in the pathway tRNA modification; tRNA-queuosine biosynthesis. In terms of biological role, transfers and isomerizes the ribose moiety from AdoMet to the 7-aminomethyl group of 7-deazaguanine (preQ1-tRNA) to give epoxyqueuosine (oQ-tRNA). This is S-adenosylmethionine:tRNA ribosyltransferase-isomerase from Staphylococcus haemolyticus (strain JCSC1435).